The sequence spans 801 residues: Squamosa promoter-binding-like protein 7 (801 aa).

Disordered stretches follow at residues 1-23 and 59-91; these read MSSLSQSPPPPEMDIQPPALVND and SPPLPPLIPTQTPAESELDPSPEESGSGSDRVR. The segment at 135–212 adopts an SBP-type; atypical zinc-finger fold; it reads VARCQVPDCE…ERHNNRRKRK (78 aa). 8 residues coordinate Zn(2+): Cys-138, Cys-143, Cys-160, Cys-163, Cys-179, Cys-182, His-186, and Cys-198. Residues 195–211 carry the Bipartite nuclear localization signal motif; that stretch reads KRSCRRKLERHNNRRKR. A compositionally biased stretch (basic residues) spans 203-213; sequence ERHNNRRKRKP. Disordered regions lie at residues 203-258 and 286-313; these read ERHN…PSLI and GSGEAQPDEGMNDTKFERSPSNGDNKSA. A compositionally biased stretch (polar residues) spans 222–233; the sequence is EQQQVLSQNDNS. Residues 249–258 show a composition bias toward basic and acidic residues; it reads QRAEEEPSLI. Residues 304–313 show a composition bias toward polar residues; the sequence is SPSNGDNKSA.

Homodimer. Interacts with KIN17. Interacts with HY5. It depends on Zn(2+) as a cofactor. In terms of tissue distribution, expressed in roots rosette leaves, cauline leaves, stems, flowers and siliques.

The protein resides in the nucleus speckle. In terms of biological role, transcription factor that participates in reprogramming global gene expression during copper deficiency in order to improve the metal uptake and prioritize its distribution to copper proteins of major importance. Binds directly to 5'-GTAC-3' motifs in the microRNA (miRNA) promoter of the stress-responsive miRNAs miR398b and miR398c to activate their transcription. During copper deficiency, activates the copper transporters COPT1 and COPT2, and the copper chaperone CCH, directly or indirectly via miRNAs. Required for the expression of the miRNAs miR397, miR408 and miR857. Acts coordinately with HY5 to regulate miR408 and its target genes in response to changes in light and copper conditions. Activates miR857 and its target genes in response to low copper conditions. Involved in cadmium stress response by regulating miR397a, miR398b, miR398c and miR857. Required for iron homeostasis during copper deficiency. This Arabidopsis thaliana (Mouse-ear cress) protein is Squamosa promoter-binding-like protein 7 (SPL7).